A 508-amino-acid polypeptide reads, in one-letter code: Nucleolar complex protein 4 homolog (508 aa).

The next 3 membrane-spanning stretches (helical) occupy residues 288–308 (VAYG…FILI), 341–361 (HLAD…AAFI), and 367–387 (LALT…CNLF).

This sequence belongs to the CBF/MAK21 family.

It is found in the nucleus membrane. The protein resides in the nucleus. It localises to the nucleolus. This is Nucleolar complex protein 4 homolog (NOC4L) from Gallus gallus (Chicken).